A 297-amino-acid polypeptide reads, in one-letter code: Transmembrane protein 178A (297 aa).

A signal peptide spans 1 to 25; sequence MEPRALVTALSLGLSLCSLGLLVTA. At 26–179 the chain is on the extracellular side; the sequence is IFTDHWYETD…LLHLRRITAG (154 aa). Residues 41–57 show a composition bias toward basic and acidic residues; it reads ESCERSRAGADPPDQKN. The interval 41 to 86 is disordered; it reads ESCERSRAGADPPDQKNRLMPLSHLPLRDSPPLGRRLLPGGPGRSD. Residues 68–79 are compositionally biased toward low complexity; sequence RDSPPLGRRLLP. Residue N158 is glycosylated (N-linked (GlcNAc...) asparagine). The chain crosses the membrane as a helical span at residues 180–200; that stretch reads FLGMAVAVLLCGCIVATVSFF. Residues 201 to 208 lie on the Cytoplasmic side of the membrane; that stretch reads WEESLTQH. A helical transmembrane segment spans residues 209 to 229; it reads VAGLLFLMTGIFCTISLCTYA. Residues 230–257 lie on the Extracellular side of the membrane; that stretch reads ASVSYDLNRVPKLIYSLPHDVEHGYSWS. Residues 258 to 278 traverse the membrane as a helical segment; sequence IFCAWCSLGFIVAAGGLCIAY. The Cytoplasmic segment spans residues 279-297; the sequence is PFISRTKIAHLKSGRDSTV.

This sequence belongs to the TMEM178 family. In terms of assembly, interacts with STIM1. As to expression, highly expressed in the bone and its expression increases during osteoclastogenesis.

It localises to the endoplasmic reticulum membrane. Its function is as follows. Acts as a negative regulator of osteoclast differentiation in basal and inflammatory conditions by regulating TNFSF11-induced Ca (2+) fluxes, thereby controlling the induction of NFATC1. In Mus musculus (Mouse), this protein is Transmembrane protein 178A (Tmem178a).